Here is a 493-residue protein sequence, read N- to C-terminus: Probable cytosol aminopeptidase (493 aa).

Mn(2+) is bound by residues Lys-260 and Asp-265. Lys-272 is an active-site residue. 3 residues coordinate Mn(2+): Asp-283, Asp-342, and Glu-344. Residue Arg-346 is part of the active site.

Belongs to the peptidase M17 family. The cofactor is Mn(2+).

The protein resides in the cytoplasm. The enzyme catalyses Release of an N-terminal amino acid, Xaa-|-Yaa-, in which Xaa is preferably Leu, but may be other amino acids including Pro although not Arg or Lys, and Yaa may be Pro. Amino acid amides and methyl esters are also readily hydrolyzed, but rates on arylamides are exceedingly low.. It carries out the reaction Release of an N-terminal amino acid, preferentially leucine, but not glutamic or aspartic acids.. In terms of biological role, presumably involved in the processing and regular turnover of intracellular proteins. Catalyzes the removal of unsubstituted N-terminal amino acids from various peptides. The polypeptide is Probable cytosol aminopeptidase (Clostridium perfringens (strain 13 / Type A)).